We begin with the raw amino-acid sequence, 930 residues long: Semaphorin-6C (930 aa).

Positions 1–24 are cleaved as a signal peptide; that stretch reads MPRAPHFMPLLLLLLLLSLPHTQA. The Extracellular segment spans residues 25–604; it reads AFPQDPLPLL…ASASRSVPIP (580 aa). Positions 30 to 516 constitute a Sema domain; it reads PLPLLISDLQ…FSGCIVYLPL (487 aa). Asn-70 carries N-linked (GlcNAc...) asparagine glycosylation. 4 disulfide bridges follow: Cys-111–Cys-121, Cys-139–Cys-148, Cys-262–Cys-373, and Cys-287–Cys-332. The N-linked (GlcNAc...) asparagine glycan is linked to Asn-286. N-linked (GlcNAc...) asparagine glycosylation is present at Asn-437. Cystine bridges form between Cys-479/Cys-510, Cys-519/Cys-537, Cys-525/Cys-570, and Cys-529/Cys-545. The interval 554–593 is disordered; that stretch reads TDVDQAGNQESMEHGDCQDGATGSQSGPGDSAYGVRRDLP. A helical transmembrane segment spans residues 605 to 625; sequence LLLASVAAAFALGASVSGLLV. Over 626-930 the chain is Cytoplasmic; that stretch reads SCACRRAHRR…AVPNGGRFNF (305 aa). 4 disordered regions span residues 654 to 674, 716 to 761, 775 to 882, and 908 to 930; these read LARL…GDAV, GDPW…PGQA, HGPQ…PGKH, and SLKP…RFNF. The segment covering 829–844 has biased composition (low complexity); it reads ASAPARPALSAPAPRL.

Belongs to the semaphorin family. In adult tissues, expressed only in skeletal muscle.

The protein localises to the cell membrane. Functionally, shows growth cone collapsing activity on dorsal root ganglion (DRG) neurons in vitro. May be a stop signal for the DRG neurons in their target areas, and possibly also for other neurons. May also be involved in the maintenance and remodeling of neuronal connections. The sequence is that of Semaphorin-6C (SEMA6C) from Homo sapiens (Human).